Consider the following 447-residue polypeptide: Cysteine--tRNA ligase (447 aa).

A Zn(2+)-binding site is contributed by Cys28. The short motif at 30–40 is the 'HIGH' region element; the sequence is PTVYNYIHIGN. Residues Cys211, His236, and Glu240 each contribute to the Zn(2+) site. The 'KMSKS' region motif lies at 268–272; that stretch reads KMSKS. Lys271 contributes to the ATP binding site.

The protein belongs to the class-I aminoacyl-tRNA synthetase family. As to quaternary structure, monomer. The cofactor is Zn(2+).

Its subcellular location is the cytoplasm. The catalysed reaction is tRNA(Cys) + L-cysteine + ATP = L-cysteinyl-tRNA(Cys) + AMP + diphosphate. The sequence is that of Cysteine--tRNA ligase from Streptococcus pyogenes serotype M6 (strain ATCC BAA-946 / MGAS10394).